Here is a 181-residue protein sequence, read N- to C-terminus: Crossover junction endodeoxyribonuclease RuvC (181 aa).

Residues Asp8, Glu67, and Asp139 contribute to the active site. Residues Asp8, Glu67, and Asp139 each contribute to the Mg(2+) site.

Belongs to the RuvC family. As to quaternary structure, homodimer which binds Holliday junction (HJ) DNA. The HJ becomes 2-fold symmetrical on binding to RuvC with unstacked arms; it has a different conformation from HJ DNA in complex with RuvA. In the full resolvosome a probable DNA-RuvA(4)-RuvB(12)-RuvC(2) complex forms which resolves the HJ. The cofactor is Mg(2+).

It is found in the cytoplasm. The enzyme catalyses Endonucleolytic cleavage at a junction such as a reciprocal single-stranded crossover between two homologous DNA duplexes (Holliday junction).. In terms of biological role, the RuvA-RuvB-RuvC complex processes Holliday junction (HJ) DNA during genetic recombination and DNA repair. Endonuclease that resolves HJ intermediates. Cleaves cruciform DNA by making single-stranded nicks across the HJ at symmetrical positions within the homologous arms, yielding a 5'-phosphate and a 3'-hydroxyl group; requires a central core of homology in the junction. The consensus cleavage sequence is 5'-(A/T)TT(C/G)-3'. Cleavage occurs on the 3'-side of the TT dinucleotide at the point of strand exchange. HJ branch migration catalyzed by RuvA-RuvB allows RuvC to scan DNA until it finds its consensus sequence, where it cleaves and resolves the cruciform DNA. The protein is Crossover junction endodeoxyribonuclease RuvC of Acinetobacter baylyi (strain ATCC 33305 / BD413 / ADP1).